We begin with the raw amino-acid sequence, 58 residues long: U8-ctenitoxin-Pr1a (58 aa).

Intrachain disulfides connect cysteine 2–cysteine 16, cysteine 9–cysteine 22, cysteine 15–cysteine 40, cysteine 24–cysteine 38, and cysteine 48–cysteine 55.

In terms of tissue distribution, expressed by the venom gland.

Its subcellular location is the secreted. In terms of biological role, no toxic effects on mice at dose levels of 5 ug per mouse. May be toxic to insects. In Phoneutria reidyi (Brazilian Amazonian armed spider), this protein is U8-ctenitoxin-Pr1a.